A 628-amino-acid chain; its full sequence is MMFNEMGMCGNMDFFSSGSLGEVDFCPVPQAEPDSIVEDDYTDDEIDVDELERRMWRDKMRLKRLKEQDKGKEGVDAAKQRQSQEQARRKKMSRAQDGILKYMLKMMEVCKAQGFVYGIIPENGKPVTGASDNLREWWKDKVRFDRNGPAAITKYQAENNIPGIHEGNNPIGPTPHTLQELQDTTLGSLLSALMQHCDPPQRRFPLEKGVPPPWWPNGKEDWWPQLGLPKDQGPAPYKKPHDLKKAWKVGVLTAVIKHMFPDIAKIRKLVRQSKCLQDKMTAKESATWLAIINQEESLARELYPESCPPLSLSGGSCSLLMNDCSQYDVEGFEKESHYEVEELKPEKVMNSSNFGMVAKMHDFPVKEEVPAGNSEFMRKRKPNRDLNTIMDRTVFTCENLGCAHSEISRGFLDRNSRDNHQLACPHRDSRLPYGAAPSRFHVNEVKPVVGFPQPRPVNSVAQPIDLTGIVPEDGQKMISELMSMYDRNVQSNQTSMVMENQSVSLLQPTVHNHQEHLQFPGNMVEGSFFEDLNIPNRANNNNSSNNQTFFQGNNNNNNVFKFDTADHNNFEAAHNNNNNSSGNRFQLVFDSTPFDMASFDYRDDMSMPGVVGTMDGMQQKQQDVSIWF.

Residues 38 to 68 (EDDYTDDEIDVDELERRMWRDKMRLKRLKEQ) adopt a coiled-coil conformation. The span at 66–79 (KEQDKGKEGVDAAK) shows a compositional bias: basic and acidic residues. A disordered region spans residues 66–92 (KEQDKGKEGVDAAKQRQSQEQARRKKM). The segment at 174 to 306 (TPHTLQELQD…SLARELYPES (133 aa)) is DNA-binding domain.

This sequence belongs to the EIN3 family. In terms of assembly, acts as a homodimer to bind the primary ethylene response element. Interacts with TAF12B. Interacts with KIN10. Binds to ENAP1 in the presence of ethylene; this reaction facilitates its association with histone. Post-translationally, phosphorylated by KIN10.

Its subcellular location is the nucleus. Activated by phosphorylation by MPK3 and MPK6. Down-regulated by KIN10 that controls its protein stability under a phosphorylation-dependent manner. Satnilitzed during hypoxia (e.g. submergences) via a ceramides-triggered and CTR1-dependent manner. Transcription factor acting as a positive regulator in the ethylene response pathway, by promoting histone acetylation in an ENAP1-dependent manner, thus accelerating the expression of ethylene-responsive genes. Binds DNA. Is required for ethylene responsiveness in adult plant tissues. Binds a primary ethylene response element present in the ETHYLENE-RESPONSE-FACTOR1 promoter with consequence to activate the transcription of this gene. In Arabidopsis thaliana (Mouse-ear cress), this protein is Protein ETHYLENE INSENSITIVE 3.